The primary structure comprises 229 residues: Large ribosomal subunit protein uL3 (229 aa).

Gln-151 is modified (N5-methylglutamine).

The protein belongs to the universal ribosomal protein uL3 family. In terms of assembly, part of the 50S ribosomal subunit. Forms a cluster with proteins L14 and L19. Methylated by PrmB.

One of the primary rRNA binding proteins, it binds directly near the 3'-end of the 23S rRNA, where it nucleates assembly of the 50S subunit. The chain is Large ribosomal subunit protein uL3 from Paramagnetospirillum magneticum (strain ATCC 700264 / AMB-1) (Magnetospirillum magneticum).